A 319-amino-acid chain; its full sequence is D-alanine--D-alanine ligase (319 aa).

The ATP-grasp domain occupies 120 to 315 (KRVLAQAGVP…YPELLRRLVE (196 aa)). Residue 147–198 (DPPFFVKPANTGSSVGISRVERFQDLEAALALAFRYDEKAVVEKALSPVREL) participates in ATP binding. Positions 270, 282, and 284 each coordinate Mg(2+).

Belongs to the D-alanine--D-alanine ligase family. Requires Mg(2+) as cofactor. The cofactor is Mn(2+).

The protein resides in the cytoplasm. The catalysed reaction is 2 D-alanine + ATP = D-alanyl-D-alanine + ADP + phosphate + H(+). It participates in cell wall biogenesis; peptidoglycan biosynthesis. In terms of biological role, cell wall formation. This is D-alanine--D-alanine ligase from Thermus thermophilus (strain ATCC 27634 / DSM 579 / HB8).